The primary structure comprises 350 residues: 4-hydroxy-3-methylbut-2-enyl diphosphate reductase (350 aa).

[4Fe-4S] cluster is bound at residue Cys-19. The (2E)-4-hydroxy-3-methylbut-2-enyl diphosphate site is built by His-48 and His-84. The dimethylallyl diphosphate site is built by His-48 and His-84. The isopentenyl diphosphate site is built by His-48 and His-84. Cys-106 contributes to the [4Fe-4S] cluster binding site. His-134 serves as a coordination point for (2E)-4-hydroxy-3-methylbut-2-enyl diphosphate. His-134 lines the dimethylallyl diphosphate pocket. Residue His-134 coordinates isopentenyl diphosphate. Glu-136 functions as the Proton donor in the catalytic mechanism. Position 175 (Thr-175) interacts with (2E)-4-hydroxy-3-methylbut-2-enyl diphosphate. Residue Cys-205 coordinates [4Fe-4S] cluster. The (2E)-4-hydroxy-3-methylbut-2-enyl diphosphate site is built by Ser-233, Ser-234, Asn-235, and Ser-278. Residues Ser-233, Ser-234, Asn-235, and Ser-278 each contribute to the dimethylallyl diphosphate site. Ser-233, Ser-234, Asn-235, and Ser-278 together coordinate isopentenyl diphosphate.

Belongs to the IspH family. [4Fe-4S] cluster is required as a cofactor.

The enzyme catalyses isopentenyl diphosphate + 2 oxidized [2Fe-2S]-[ferredoxin] + H2O = (2E)-4-hydroxy-3-methylbut-2-enyl diphosphate + 2 reduced [2Fe-2S]-[ferredoxin] + 2 H(+). It catalyses the reaction dimethylallyl diphosphate + 2 oxidized [2Fe-2S]-[ferredoxin] + H2O = (2E)-4-hydroxy-3-methylbut-2-enyl diphosphate + 2 reduced [2Fe-2S]-[ferredoxin] + 2 H(+). It functions in the pathway isoprenoid biosynthesis; dimethylallyl diphosphate biosynthesis; dimethylallyl diphosphate from (2E)-4-hydroxy-3-methylbutenyl diphosphate: step 1/1. It participates in isoprenoid biosynthesis; isopentenyl diphosphate biosynthesis via DXP pathway; isopentenyl diphosphate from 1-deoxy-D-xylulose 5-phosphate: step 6/6. Functionally, catalyzes the conversion of 1-hydroxy-2-methyl-2-(E)-butenyl 4-diphosphate (HMBPP) into a mixture of isopentenyl diphosphate (IPP) and dimethylallyl diphosphate (DMAPP). Acts in the terminal step of the DOXP/MEP pathway for isoprenoid precursor biosynthesis. In Brucella anthropi (strain ATCC 49188 / DSM 6882 / CCUG 24695 / JCM 21032 / LMG 3331 / NBRC 15819 / NCTC 12168 / Alc 37) (Ochrobactrum anthropi), this protein is 4-hydroxy-3-methylbut-2-enyl diphosphate reductase.